The sequence spans 120 residues: Large ribosomal subunit protein uL24 (120 aa).

This sequence belongs to the universal ribosomal protein uL24 family. In terms of assembly, part of the 50S ribosomal subunit.

Its function is as follows. One of two assembly initiator proteins, it binds directly to the 5'-end of the 23S rRNA, where it nucleates assembly of the 50S subunit. One of the proteins that surrounds the polypeptide exit tunnel on the outside of the subunit. The polypeptide is Large ribosomal subunit protein uL24 (Pseudarthrobacter chlorophenolicus (strain ATCC 700700 / DSM 12829 / CIP 107037 / JCM 12360 / KCTC 9906 / NCIMB 13794 / A6) (Arthrobacter chlorophenolicus)).